The sequence spans 36 residues: Potassium channel toxin alpha-KTx 2.7 (36 aa).

Cystine bridges form between Cys7–Cys29, Cys13–Cys34, and Cys17–Cys36.

It belongs to the short scorpion toxin superfamily. Potassium channel inhibitor family. Alpha-KTx 02 subfamily. As to expression, expressed by the venom gland.

It localises to the secreted. Its function is as follows. Inhibitor of voltage-gated potassium channels (Kv). This protein is capable of displacing the binding of radio-labeled noxiustoxin (AC P08815) to rat brain synaptosomes with high affinity (about 100 pM). It is also capable of inhibiting transient potassium-currents (resembling I(A)-type currents), in cultured rat cerebellar granule cells. About 50% of the peak currents are reduced by application of a 1.5 uM solution of this toxin. Is lethal to mice (when less than 100 ug are injected). In Centruroides limpidus (Mexican scorpion), this protein is Potassium channel toxin alpha-KTx 2.7.